We begin with the raw amino-acid sequence, 126 residues long: MPEPAKSAPAAKKGSKKAVSKVQKKDGKKRRKSRKESYAIYVYKVLKQVHPDTGISSKAMSIMNSFVNDIFERIAGEASRLAHYNKRSTITSREIQTAVRLLLPGELAKHAVSEGTKAVTKYTSAK.

A compositionally biased stretch (low complexity) spans 1–12; sequence MPEPAKSAPAAK. Positions 1–35 are disordered; that stretch reads MPEPAKSAPAAKKGSKKAVSKVQKKDGKKRRKSRK. Lys6 and Lys13 each carry N6-acetyllysine. Phosphoserine is present on Ser15. N6-acetyllysine occurs at positions 16 and 21. Residue Ser113 is glycosylated (O-linked (GlcNAc) serine). Lys121 participates in a covalent cross-link: Glycyl lysine isopeptide (Lys-Gly) (interchain with G-Cter in ubiquitin).

It belongs to the histone H2B family. In terms of assembly, the nucleosome is a histone octamer containing two molecules each of H2A, H2B, H3 and H4 assembled in one H3-H4 heterotetramer and two H2A-H2B heterodimers. The octamer wraps approximately 147 bp of DNA. Post-translationally, monoubiquitination of Lys-121 by BRE1 gives a specific tag for epigenetic transcriptional activation and is also prerequisite for histone H3 'Lys-4' and 'Lys-79' methylation. Phosphorylated on Ser-15 during apoptosis; which facilitates apoptotic chromatin condensation. In terms of processing, glcNAcylation at Ser-113 promotes monoubiquitination of Lys-121. It fluctuates in response to extracellular glucose, and associates with transcribed genes. As to expression, expressed by the skin granular glands.

The protein localises to the nucleus. The protein resides in the secreted. It localises to the chromosome. Its function is as follows. Core component of nucleosome. Nucleosomes wrap and compact DNA into chromatin, limiting DNA accessibility to the cellular machineries which require DNA as a template. Histones thereby play a central role in transcription regulation, DNA repair, DNA replication and chromosomal stability. DNA accessibility is regulated via a complex set of post-translational modifications of histones, also called histone code, and nucleosome remodeling. In terms of biological role, has antibacterial activity against the Gram-negative bacteria E.coli and the Gram-positive bacteria S.aureus. The protein is Histone H2B of Zhangixalus schlegelii (Japanese gliding frog).